Consider the following 226-residue polypeptide: Uridylate kinase (226 aa).

An ATP-binding site is contributed by 9–10; it reads GS. G46 lines the UMP pocket. Residues G47 and R51 each contribute to the ATP site. UMP contacts are provided by residues D68 and 116–122; that span reads THPGHTT. The ATP site is built by T142, N143, Y148, and D151.

The protein belongs to the UMP kinase family. In terms of assembly, homohexamer.

The protein localises to the cytoplasm. It carries out the reaction UMP + ATP = UDP + ADP. It participates in pyrimidine metabolism; CTP biosynthesis via de novo pathway; UDP from UMP (UMPK route): step 1/1. Inhibited by UTP. Catalyzes the reversible phosphorylation of UMP to UDP. The protein is Uridylate kinase of Methanocaldococcus jannaschii (strain ATCC 43067 / DSM 2661 / JAL-1 / JCM 10045 / NBRC 100440) (Methanococcus jannaschii).